The chain runs to 270 residues: NAD kinase (270 aa).

Asp-61 serves as the catalytic Proton acceptor. NAD(+) is bound by residues 61-62 (DG), 133-134 (NE), Arg-144, Arg-163, Asp-165, and 176-181 (TAYNLS).

Belongs to the NAD kinase family. It depends on a divalent metal cation as a cofactor.

The protein resides in the cytoplasm. It carries out the reaction NAD(+) + ATP = ADP + NADP(+) + H(+). Its function is as follows. Involved in the regulation of the intracellular balance of NAD and NADP, and is a key enzyme in the biosynthesis of NADP. Catalyzes specifically the phosphorylation on 2'-hydroxyl of the adenosine moiety of NAD to yield NADP. In Natronomonas pharaonis (strain ATCC 35678 / DSM 2160 / CIP 103997 / JCM 8858 / NBRC 14720 / NCIMB 2260 / Gabara) (Halobacterium pharaonis), this protein is NAD kinase.